Consider the following 381-residue polypeptide: Probable peptidoglycan glycosyltransferase FtsW (381 aa).

Residues 1–15 are Cytoplasmic-facing; it reads MNNKKKIVKIFFYDK. The chain crosses the membrane as a helical span at residues 16–36; that stretch reads ILFFLLISLSIIGIIIVSSAS. The Periplasmic portion of the chain corresponds to 37-53; the sequence is ISFGIRLHNDYFYFAKR. A helical membrane pass occupies residues 54-74; the sequence is NLLYFFLSFFLFFQIIRIPIN. Residues 75–81 are Cytoplasmic-facing; the sequence is QLEKYNK. Residues 82–102 form a helical membrane-spanning segment; the sequence is IALLINLFLLIIVFIIGNSIN. Over 103 to 109 the chain is Periplasmic; sequence GAIRWIK. A helical membrane pass occupies residues 110-130; that stretch reads IGFFSIQPSECSKLILFFYIS. The Cytoplasmic portion of the chain corresponds to 131–143; the sequence is DYIVKKNKELKNK. A helical membrane pass occupies residues 144–164; it reads LWGFLKPIIIMLIFVILLLMQ. Residues 165 to 166 lie on the Periplasmic side of the membrane; sequence PD. 2 helical membrane-spanning segments follow: residues 167-187 and 188-208; these read LGNS…AGIN and LWKC…LIIF. Over 209-278 the chain is Periplasmic; that stretch reads KPYRIRRILS…FSILGEELGY (70 aa). Residues 279–299 traverse the membrane as a helical segment; it reads IGSIIILIMLFFVIFRIFLIG. The Cytoplasmic segment spans residues 300-317; that stretch reads KNSFIQKKFFSGYFSFSV. The helical transmembrane segment at 318 to 338 threads the bilayer; that stretch reads GIWISLQTIMNVGGVIGILPI. Topologically, residues 339-343 are periplasmic; that stretch reads KGLTL. Residues 344–364 form a helical membrane-spanning segment; sequence PFISYGGSSLITIFSAIAIVI. The Cytoplasmic portion of the chain corresponds to 365–381; that stretch reads RSDFELRINKYQAYLKQ.

This sequence belongs to the SEDS family. FtsW subfamily.

It localises to the cell inner membrane. The catalysed reaction is [GlcNAc-(1-&gt;4)-Mur2Ac(oyl-L-Ala-gamma-D-Glu-L-Lys-D-Ala-D-Ala)](n)-di-trans,octa-cis-undecaprenyl diphosphate + beta-D-GlcNAc-(1-&gt;4)-Mur2Ac(oyl-L-Ala-gamma-D-Glu-L-Lys-D-Ala-D-Ala)-di-trans,octa-cis-undecaprenyl diphosphate = [GlcNAc-(1-&gt;4)-Mur2Ac(oyl-L-Ala-gamma-D-Glu-L-Lys-D-Ala-D-Ala)](n+1)-di-trans,octa-cis-undecaprenyl diphosphate + di-trans,octa-cis-undecaprenyl diphosphate + H(+). It participates in cell wall biogenesis; peptidoglycan biosynthesis. Functionally, peptidoglycan polymerase that is essential for cell division. The chain is Probable peptidoglycan glycosyltransferase FtsW from Wigglesworthia glossinidia brevipalpis.